Consider the following 155-residue polypeptide: Large ribosomal subunit protein uL15 (155 aa).

The segment at 1–63 (MKLHELAPNP…QMPLTRRLPK (63 aa)) is disordered. Gly residues-rich tracts occupy residues 21–31 (RGIGSGLGKTS) and 42–52 (SGGGVRPGFEG).

The protein belongs to the universal ribosomal protein uL15 family. Part of the 50S ribosomal subunit.

Functionally, binds to the 23S rRNA. The chain is Large ribosomal subunit protein uL15 from Symbiobacterium thermophilum (strain DSM 24528 / JCM 14929 / IAM 14863 / T).